Consider the following 86-residue polypeptide: Small ribosomal subunit protein bS16 (86 aa).

Belongs to the bacterial ribosomal protein bS16 family.

The chain is Small ribosomal subunit protein bS16 from Acidithiobacillus ferrooxidans (strain ATCC 23270 / DSM 14882 / CIP 104768 / NCIMB 8455) (Ferrobacillus ferrooxidans (strain ATCC 23270)).